Here is a 266-residue protein sequence, read N- to C-terminus: Esterase AGAP003155 (266 aa).

Catalysis depends on charge relay system residues Ser-114, Asp-172, and His-199. Residues 231 to 266 (ATEENSFHLEGQEEAEESALQPVHEGLQNGSDSDSD) are disordered.

The protein belongs to the LovG family.

This is Esterase AGAP003155 from Anopheles gambiae (African malaria mosquito).